The following is a 442-amino-acid chain: tRNA modification GTPase MnmE (442 aa).

Residues R27, E84, and K124 each coordinate (6S)-5-formyl-5,6,7,8-tetrahydrofolate. A TrmE-type G domain is found at G221 to E366. Residues N231–S236, S250–T256, and D275–G278 contribute to the GTP site. Mg(2+) is bound by residues S235 and T256. K442 serves as a coordination point for (6S)-5-formyl-5,6,7,8-tetrahydrofolate.

It belongs to the TRAFAC class TrmE-Era-EngA-EngB-Septin-like GTPase superfamily. TrmE GTPase family. In terms of assembly, homodimer. Heterotetramer of two MnmE and two MnmG subunits. The cofactor is K(+).

The protein resides in the cytoplasm. Exhibits a very high intrinsic GTPase hydrolysis rate. Involved in the addition of a carboxymethylaminomethyl (cmnm) group at the wobble position (U34) of certain tRNAs, forming tRNA-cmnm(5)s(2)U34. The sequence is that of tRNA modification GTPase MnmE from Brucella melitensis biotype 1 (strain ATCC 23456 / CCUG 17765 / NCTC 10094 / 16M).